The primary structure comprises 438 residues: Xylose isomerase (438 aa).

Active-site residues include His100 and Asp103. Residues Glu231, Glu267, His270, Asp295, Asp306, Asp308, and Asp338 each coordinate Mg(2+).

Belongs to the xylose isomerase family. In terms of assembly, homotetramer. The cofactor is Mg(2+).

The protein localises to the cytoplasm. It carries out the reaction alpha-D-xylose = alpha-D-xylulofuranose. The protein is Xylose isomerase (xylA) of Thermoanaerobacter pseudethanolicus (strain ATCC 33223 / 39E) (Clostridium thermohydrosulfuricum).